We begin with the raw amino-acid sequence, 376 residues long: Growth/differentiation factor 8 (376 aa).

An N-terminal signal peptide occupies residues 1 to 24 (MMQKLQMYVYIYLFMLIAAGPVDL). Residues 25–267 (NEGSEREENV…VTDTPKRSRR (243 aa)) constitute a propeptide that is removed on maturation. N72 is a glycosylation site (N-linked (GlcNAc...) asparagine). 4 disulfides stabilise this stretch: C273-C283, C282-C341, C310-C373, and C314-C375.

This sequence belongs to the TGF-beta family. Homodimer; disulfide-linked. Interacts with WFIKKN2, leading to inhibit its activity. Interacts with FSTL3. Post-translationally, synthesized as large precursor molecule that undergoes proteolytic cleavage to generate an N-terminal propeptide and a disulfide linked C-terminal dimer, which is the biologically active molecule. The circulating form consists of a latent complex of the C-terminal dimer and other proteins, including its propeptide, which maintain the C-terminal dimer in a latent, inactive state. Ligand activation requires additional cleavage of the prodomain by a tolloid-like metalloproteinase. In terms of tissue distribution, expressed specifically in developing and adult skeletal muscle. Weak expression in adipose tissue.

The protein localises to the secreted. Functionally, acts specifically as a negative regulator of skeletal muscle growth. The sequence is that of Growth/differentiation factor 8 (Mstn) from Mus musculus (Mouse).